Consider the following 353-residue polypeptide: UPF0283 membrane protein YcjF (353 aa).

Transmembrane regions (helical) follow at residues 70–90 (MVMG…VQWT), 100–120 (VALG…GSVV), and 213–233 (ESTL…FIAW).

It belongs to the UPF0283 family.

It is found in the cell inner membrane. In Escherichia coli O7:K1 (strain IAI39 / ExPEC), this protein is UPF0283 membrane protein YcjF.